The chain runs to 270 residues: 3-phenylpropionate-dihydrodiol/cinnamic acid-dihydrodiol dehydrogenase (270 aa).

10 to 34 provides a ligand contact to NAD(+); sequence FITGGGSGLGLALVERFIEEGAQVA. A substrate-binding site is contributed by Ser143. Catalysis depends on Tyr156, which acts as the Proton acceptor.

It belongs to the short-chain dehydrogenases/reductases (SDR) family.

The enzyme catalyses 3-(cis-5,6-dihydroxycyclohexa-1,3-dien-1-yl)propanoate + NAD(+) = 3-(2,3-dihydroxyphenyl)propanoate + NADH + H(+). The catalysed reaction is (2E)-3-(cis-5,6-dihydroxycyclohexa-1,3-dien-1-yl)prop-2-enoate + NAD(+) = (2E)-3-(2,3-dihydroxyphenyl)prop-2-enoate + NADH + H(+). Its pathway is aromatic compound metabolism; 3-phenylpropanoate degradation. Its function is as follows. Converts 3-phenylpropionate-dihydrodiol (PP-dihydrodiol) and cinnamic acid-dihydrodiol (CI-dihydrodiol) into 3-(2,3-dihydroxylphenyl)propanoic acid (DHPP) and 2,3-dihydroxicinnamic acid (DHCI), respectively. The sequence is that of 3-phenylpropionate-dihydrodiol/cinnamic acid-dihydrodiol dehydrogenase from Escherichia coli (strain ATCC 8739 / DSM 1576 / NBRC 3972 / NCIMB 8545 / WDCM 00012 / Crooks).